The primary structure comprises 715 residues: Polyribonucleotide nucleotidyltransferase (715 aa).

Mg(2+) is bound by residues Asp-487 and Asp-493. A KH domain is found at 554-613; it reads PRIETFKIATDKIREVIGTGGKVIREIVEKTGAKVNIDDDGTVKVASSDGESIKAAIKWI. In terms of domain architecture, S1 motif spans 623–691; sequence NAIYDGTVVK…DRGKTRLSMK (69 aa). Residues 696 to 715 form a disordered region; the sequence is ETGEDLEAKQKAAEGATAAE.

This sequence belongs to the polyribonucleotide nucleotidyltransferase family. Requires Mg(2+) as cofactor.

It localises to the cytoplasm. The enzyme catalyses RNA(n+1) + phosphate = RNA(n) + a ribonucleoside 5'-diphosphate. Involved in mRNA degradation. Catalyzes the phosphorolysis of single-stranded polyribonucleotides processively in the 3'- to 5'-direction. The polypeptide is Polyribonucleotide nucleotidyltransferase (Rhodopseudomonas palustris (strain BisB18)).